A 266-amino-acid chain; its full sequence is Indole-3-glycerol phosphate synthase (266 aa).

This sequence belongs to the TrpC family.

The enzyme catalyses 1-(2-carboxyphenylamino)-1-deoxy-D-ribulose 5-phosphate + H(+) = (1S,2R)-1-C-(indol-3-yl)glycerol 3-phosphate + CO2 + H2O. The protein operates within amino-acid biosynthesis; L-tryptophan biosynthesis; L-tryptophan from chorismate: step 4/5. The polypeptide is Indole-3-glycerol phosphate synthase (Paracidovorax citrulli (strain AAC00-1) (Acidovorax citrulli)).